We begin with the raw amino-acid sequence, 704 residues long: Phosphate acetyltransferase (704 aa).

The tract at residues 379 to 704 is phosphate acetyltransferase; the sequence is AFRYQVVQRA…AIQADAQAPA (326 aa).

It in the N-terminal section; belongs to the CobB/CobQ family. This sequence in the C-terminal section; belongs to the phosphate acetyltransferase and butyryltransferase family. As to quaternary structure, homohexamer.

The protein localises to the cytoplasm. The enzyme catalyses acetyl-CoA + phosphate = acetyl phosphate + CoA. The protein operates within metabolic intermediate biosynthesis; acetyl-CoA biosynthesis; acetyl-CoA from acetate: step 2/2. Activity is increased under anaerobic growth conditions. In terms of biological role, involved in acetate metabolism. In combination with LdhA and AckA, allows fermentation of pyruvate, enhancing long-term survival under anaerobic conditions. This chain is Phosphate acetyltransferase (pta), found in Pseudomonas aeruginosa (strain ATCC 15692 / DSM 22644 / CIP 104116 / JCM 14847 / LMG 12228 / 1C / PRS 101 / PAO1).